Reading from the N-terminus, the 118-residue chain is Large ribosomal subunit protein bL19 (118 aa).

Belongs to the bacterial ribosomal protein bL19 family.

Its function is as follows. This protein is located at the 30S-50S ribosomal subunit interface and may play a role in the structure and function of the aminoacyl-tRNA binding site. This is Large ribosomal subunit protein bL19 from Onion yellows phytoplasma (strain OY-M).